The chain runs to 297 residues: tRNA pseudouridine synthase B (297 aa).

The active-site Nucleophile is Asp-44.

The protein belongs to the pseudouridine synthase TruB family. Type 1 subfamily.

The enzyme catalyses uridine(55) in tRNA = pseudouridine(55) in tRNA. Responsible for synthesis of pseudouridine from uracil-55 in the psi GC loop of transfer RNAs. This is tRNA pseudouridine synthase B from Corynebacterium efficiens (strain DSM 44549 / YS-314 / AJ 12310 / JCM 11189 / NBRC 100395).